The chain runs to 91 residues: Acylphosphatase (91 aa).

One can recognise an Acylphosphatase-like domain in the interval 5 to 91; sequence CLHAYVGGRV…QGIAGFVVRR (87 aa). Catalysis depends on residues R20 and N38.

This sequence belongs to the acylphosphatase family.

The enzyme catalyses an acyl phosphate + H2O = a carboxylate + phosphate + H(+). This is Acylphosphatase (acyP) from Pseudomonas aeruginosa (strain ATCC 15692 / DSM 22644 / CIP 104116 / JCM 14847 / LMG 12228 / 1C / PRS 101 / PAO1).